We begin with the raw amino-acid sequence, 491 residues long: Probable glycogen synthase 2 (491 aa).

Lys15 serves as a coordination point for ADP-alpha-D-glucose.

Belongs to the glycosyltransferase 1 family. Bacterial/plant glycogen synthase subfamily.

It carries out the reaction [(1-&gt;4)-alpha-D-glucosyl](n) + ADP-alpha-D-glucose = [(1-&gt;4)-alpha-D-glucosyl](n+1) + ADP + H(+). Its pathway is glycan biosynthesis; glycogen biosynthesis. Its function is as follows. Synthesizes alpha-1,4-glucan chains using ADP-glucose. The polypeptide is Probable glycogen synthase 2 (glgA2) (Synechocystis sp. (strain ATCC 27184 / PCC 6803 / Kazusa)).